A 720-amino-acid chain; its full sequence is Replication restart protein PriA (720 aa).

Positions 200–366 (ILMKNCFTSW…LHKKCFYIKF (167 aa)) constitute a Helicase ATP-binding domain. 213-220 (KNNFYLKV) contributes to the ATP binding site. Residues 309 to 312 (NQEH) carry the DEAH box motif. Zn(2+)-binding residues include Cys425, Cys428, Cys434, Cys437, Cys452, Cys455, Cys465, and Cys468.

It belongs to the helicase family. PriA subfamily. In terms of assembly, component of the replication restart primosome. The cofactor is Zn(2+).

It carries out the reaction Couples ATP hydrolysis with the unwinding of duplex DNA by translocating in the 3'-5' direction.. The catalysed reaction is ATP + H2O = ADP + phosphate + H(+). Its function is as follows. Initiates the restart of stalled replication forks, which reloads the replicative helicase on sites other than the origin of replication. Recognizes and binds to abandoned replication forks and remodels them to uncover a helicase loading site. Promotes assembly of the primosome at these replication forks. The polypeptide is Replication restart protein PriA (Buchnera aphidicola subsp. Schizaphis graminum (strain Sg)).